An 87-amino-acid polypeptide reads, in one-letter code: Small ribosomal subunit protein eS21 (87 aa).

The protein belongs to the eukaryotic ribosomal protein eS21 family. As to quaternary structure, component of the small ribosomal subunit (SSU). Mature N.crassa ribosomes consist of a small (40S) and a large (60S) subunit. The 40S small subunit contains 1 molecule of ribosomal RNA (18S rRNA) and at least 32 different proteins. The large 60S subunit contains 3 rRNA molecules (26S, 5.8S and 5S rRNA) and at least 42 different proteins.

It is found in the cytoplasm. In terms of biological role, component of the ribosome, a large ribonucleoprotein complex responsible for the synthesis of proteins in the cell. The small ribosomal subunit (SSU) binds messenger RNAs (mRNAs) and translates the encoded message by selecting cognate aminoacyl-transfer RNA (tRNA) molecules. The large subunit (LSU) contains the ribosomal catalytic site termed the peptidyl transferase center (PTC), which catalyzes the formation of peptide bonds, thereby polymerizing the amino acids delivered by tRNAs into a polypeptide chain. The nascent polypeptides leave the ribosome through a tunnel in the LSU and interact with protein factors that function in enzymatic processing, targeting, and the membrane insertion of nascent chains at the exit of the ribosomal tunnel. The protein is Small ribosomal subunit protein eS21 (crp-7) of Neurospora crassa (strain ATCC 24698 / 74-OR23-1A / CBS 708.71 / DSM 1257 / FGSC 987).